A 470-amino-acid polypeptide reads, in one-letter code: Cysteine--tRNA ligase (470 aa).

Position 28 (Cys-28) interacts with Zn(2+). A 'HIGH' region motif is present at residues 30–40 (PTVYNYIHIGN). The Zn(2+) site is built by Cys-212, His-237, and Glu-241. Positions 271–275 (KMSKS) match the 'KMSKS' region motif. Residue Lys-274 coordinates ATP.

It belongs to the class-I aminoacyl-tRNA synthetase family. Monomer. The cofactor is Zn(2+).

The protein resides in the cytoplasm. It carries out the reaction tRNA(Cys) + L-cysteine + ATP = L-cysteinyl-tRNA(Cys) + AMP + diphosphate. The polypeptide is Cysteine--tRNA ligase (Pediococcus pentosaceus (strain ATCC 25745 / CCUG 21536 / LMG 10740 / 183-1w)).